A 431-amino-acid chain; its full sequence is MGKNVVVLGTQWGDEGKGKIVDLLTEQAKYVVRYQGGHNAGHTLVIDGDKTVLHLIPSGILRDNVKCIIGNGVVLAPDALMKEINMLKERGVPVEERLLISEACPLILPFHCALDIAREKARGNKAIGTTGRGIGPAYEDKISRRGLRVGDLFNAELFAEKLKEVMAYHNFMLTEYYGCEAVDYETTLKDALAIADYLKSMCTDVTELLDQARKNGDNILFEGAQGTLLDIDHGTYPFVTSSNTTAGGVATGSGFGPRHLDYVCGIIKAYTTRVGAGPFPTELRDEIGDHLGTKGQEFGATTGRKRRPGWLDIVAMKRAVQINSISGFCLTKLDVLDGLKEVKLCVGYQYPDGSISTVTPLAAEGYEQVTPVLETMPGWSESTFGATSIDQLPQAALDYIKRIEELLETPVDIISTGPDRNETMILVNPFS.

Residues 13–19 and 41–43 each bind GTP; these read GDEGKGK and GHT. Asp-14 acts as the Proton acceptor in catalysis. Residues Asp-14 and Gly-41 each coordinate Mg(2+). Residues 14–17, 39–42, Thr-130, Arg-144, Gln-225, Thr-240, and Arg-304 contribute to the IMP site; these read DEGK and NAGH. Catalysis depends on His-42, which acts as the Proton donor. 300–306 contacts substrate; it reads ATTGRKR. GTP-binding positions include Arg-306, 332-334, and 415-417; these read KLD and STG.

The protein belongs to the adenylosuccinate synthetase family. Homodimer. It depends on Mg(2+) as a cofactor.

It is found in the cytoplasm. It carries out the reaction IMP + L-aspartate + GTP = N(6)-(1,2-dicarboxyethyl)-AMP + GDP + phosphate + 2 H(+). Its pathway is purine metabolism; AMP biosynthesis via de novo pathway; AMP from IMP: step 1/2. Plays an important role in the de novo pathway of purine nucleotide biosynthesis. Catalyzes the first committed step in the biosynthesis of AMP from IMP. This Shewanella loihica (strain ATCC BAA-1088 / PV-4) protein is Adenylosuccinate synthetase.